Consider the following 127-residue polypeptide: Glycine cleavage system H protein (127 aa).

Positions 24–105 constitute a Lipoyl-binding domain; it reads TALVGITDFA…YGEGWMVKMK (82 aa). Lysine 65 carries the N6-lipoyllysine modification.

It belongs to the GcvH family. As to quaternary structure, the glycine cleavage system is composed of four proteins: P, T, L and H. The cofactor is (R)-lipoate.

The glycine cleavage system catalyzes the degradation of glycine. The H protein shuttles the methylamine group of glycine from the P protein to the T protein. The sequence is that of Glycine cleavage system H protein from Chlorobium phaeovibrioides (strain DSM 265 / 1930) (Prosthecochloris vibrioformis (strain DSM 265)).